A 321-amino-acid polypeptide reads, in one-letter code: MIFSTLEHILTHISFSVVSIVITIHLITLLVDEIIGLYDSLEKGMMTTFFCITGLLMTRWIYLRYLPLSNLYESLIFLSWSFSIIHMVPYFKKYKNYLKAITAPSAIFTQGFATSGLLTEMHQSEILVPALQSHWLMMHVSMMVLGYAALLCGSLLSLALLVITFRKFISIFSKSNNFVNESFSLGEIQYVREKNNLLPNTSFLSSRNYYRFQLIQQLDLWSYRIISLGFIFLTIGILSGAVWANEAWGSYWNWDPKETWAFITWTLFSIYLHTRTNKNFESVNSAIVASMGFLIIWICYFGVNLLGIGLHSYGSFTLTSN.

Transmembrane regions (helical) follow at residues 17 to 37, 46 to 63, 71 to 91, 98 to 118, 143 to 163, 225 to 245, 259 to 273, and 286 to 306; these read VVSI…IIGL, MTTF…WIYL, LYES…VPYF, LKAI…SGLL, MVLG…LLVI, IISL…VWAN, TWAF…IYLH, and AIVA…VNLL.

The protein belongs to the CcmF/CycK/Ccl1/NrfE/CcsA family. May interact with Ccs1.

The protein resides in the plastid. It localises to the chloroplast thylakoid membrane. Functionally, required during biogenesis of c-type cytochromes (cytochrome c6 and cytochrome f) at the step of heme attachment. The sequence is that of Cytochrome c biogenesis protein CcsA from Morus indica (Mulberry).